Reading from the N-terminus, the 295-residue chain is Glutamyl-Q tRNA(Asp) synthetase (295 aa).

L-glutamate-binding positions include arginine 9–threonine 13 and glutamate 45. The 'HIGH' region signature appears at proline 12 to serine 22. 4 residues coordinate Zn(2+): cysteine 101, cysteine 103, tyrosine 115, and cysteine 119. L-glutamate-binding residues include tyrosine 172 and arginine 190. The 'KMSKS' region signature appears at lysine 228–serine 232. Lysine 231 serves as a coordination point for ATP.

The protein belongs to the class-I aminoacyl-tRNA synthetase family. GluQ subfamily. Zn(2+) serves as cofactor.

In terms of biological role, catalyzes the tRNA-independent activation of glutamate in presence of ATP and the subsequent transfer of glutamate onto a tRNA(Asp). Glutamate is transferred on the 2-amino-5-(4,5-dihydroxy-2-cyclopenten-1-yl) moiety of the queuosine in the wobble position of the QUC anticodon. This Pseudomonas syringae pv. tomato (strain ATCC BAA-871 / DC3000) protein is Glutamyl-Q tRNA(Asp) synthetase.